Here is a 291-residue protein sequence, read N- to C-terminus: Nucleotide-binding protein MSMEG_3079/MSMEI_3001 (291 aa).

14 to 21 (GLSGAGRG) is a binding site for ATP. Residue 65-68 (DVRS) coordinates GTP.

It belongs to the RapZ-like family.

In terms of biological role, displays ATPase and GTPase activities. This chain is Nucleotide-binding protein MSMEG_3079/MSMEI_3001, found in Mycolicibacterium smegmatis (strain ATCC 700084 / mc(2)155) (Mycobacterium smegmatis).